The sequence spans 345 residues: Phosphoribosylformylglycinamidine cyclo-ligase (345 aa).

The protein belongs to the AIR synthase family.

It localises to the cytoplasm. It catalyses the reaction 2-formamido-N(1)-(5-O-phospho-beta-D-ribosyl)acetamidine + ATP = 5-amino-1-(5-phospho-beta-D-ribosyl)imidazole + ADP + phosphate + H(+). The protein operates within purine metabolism; IMP biosynthesis via de novo pathway; 5-amino-1-(5-phospho-D-ribosyl)imidazole from N(2)-formyl-N(1)-(5-phospho-D-ribosyl)glycinamide: step 2/2. The chain is Phosphoribosylformylglycinamidine cyclo-ligase from Bifidobacterium longum (strain DJO10A).